The primary structure comprises 173 residues: Ferric citrate uptake sigma factor FecI (173 aa).

The Polymerase core binding motif lies at 40–52 (DIAQDTFLRVMVS). A DNA-binding region (H-T-H motif) is located at residues 139–158 (YSEIAHKLGVSISSVKKYVA).

The protein belongs to the sigma-70 factor family. ECF subfamily. Interacts with FecR (via cytoplasmic N-terminus).

In terms of biological role, sigma factors are initiation factors that promote the attachment of RNA polymerase to specific initiation sites and are then released. This sigma factor regulates transcriptional activation of the fecABCDE operon which mediates ferric citrate transport. In Escherichia coli (strain K12), this protein is Ferric citrate uptake sigma factor FecI (fecI).